A 193-amino-acid polypeptide reads, in one-letter code: Segregation and condensation protein B (193 aa).

This sequence belongs to the ScpB family. Homodimer. Homodimerization may be required to stabilize the binding of ScpA to the Smc head domains. Component of a cohesin-like complex composed of ScpA, ScpB and the Smc homodimer, in which ScpA and ScpB bind to the head domain of Smc. The presence of the three proteins is required for the association of the complex with DNA.

Its subcellular location is the cytoplasm. Participates in chromosomal partition during cell division. May act via the formation of a condensin-like complex containing Smc and ScpA that pull DNA away from mid-cell into both cell halves. This chain is Segregation and condensation protein B, found in Shouchella clausii (strain KSM-K16) (Alkalihalobacillus clausii).